Reading from the N-terminus, the 295-residue chain is Ribosomal RNA small subunit methyltransferase A (295 aa).

S-adenosyl-L-methionine is bound by residues Asn-25, Leu-27, Gly-52, Glu-73, Asp-98, and Asn-120.

This sequence belongs to the class I-like SAM-binding methyltransferase superfamily. rRNA adenine N(6)-methyltransferase family. RsmA subfamily.

Its subcellular location is the cytoplasm. The catalysed reaction is adenosine(1518)/adenosine(1519) in 16S rRNA + 4 S-adenosyl-L-methionine = N(6)-dimethyladenosine(1518)/N(6)-dimethyladenosine(1519) in 16S rRNA + 4 S-adenosyl-L-homocysteine + 4 H(+). Its function is as follows. Specifically dimethylates two adjacent adenosines (A1518 and A1519) in the loop of a conserved hairpin near the 3'-end of 16S rRNA in the 30S particle. May play a critical role in biogenesis of 30S subunits. The protein is Ribosomal RNA small subunit methyltransferase A of Desulfotalea psychrophila (strain LSv54 / DSM 12343).